The primary structure comprises 368 residues: Ribosomal RNA large subunit methyltransferase M (368 aa).

S-adenosyl-L-methionine contacts are provided by residues S189, 222–225 (CPGG), D241, D261, and D278. The active-site Proton acceptor is K307.

It belongs to the class I-like SAM-binding methyltransferase superfamily. RNA methyltransferase RlmE family. RlmM subfamily. In terms of assembly, monomer.

It localises to the cytoplasm. It catalyses the reaction cytidine(2498) in 23S rRNA + S-adenosyl-L-methionine = 2'-O-methylcytidine(2498) in 23S rRNA + S-adenosyl-L-homocysteine + H(+). Catalyzes the 2'-O-methylation at nucleotide C2498 in 23S rRNA. The chain is Ribosomal RNA large subunit methyltransferase M from Yersinia pseudotuberculosis serotype O:1b (strain IP 31758).